Here is a 546-residue protein sequence, read N- to C-terminus: ATP synthase subunit alpha (546 aa).

An ATP-binding site is contributed by 172-179; the sequence is GDRKTGKT. 2 stretches are compositionally biased toward polar residues: residues 511 to 520 and 536 to 546; these read FRTTEGNNLG and TELNVSRKTAK. The disordered stretch occupies residues 511-546; it reads FRTTEGNNLGTEAPVDPLAADDVNKTELNVSRKTAK.

Belongs to the ATPase alpha/beta chains family. As to quaternary structure, F-type ATPases have 2 components, CF(1) - the catalytic core - and CF(0) - the membrane proton channel. CF(1) has five subunits: alpha(3), beta(3), gamma(1), delta(1), epsilon(1). CF(0) has three main subunits: a(1), b(2) and c(9-12). The alpha and beta chains form an alternating ring which encloses part of the gamma chain. CF(1) is attached to CF(0) by a central stalk formed by the gamma and epsilon chains, while a peripheral stalk is formed by the delta and b chains.

The protein resides in the cell membrane. It catalyses the reaction ATP + H2O + 4 H(+)(in) = ADP + phosphate + 5 H(+)(out). Its function is as follows. Produces ATP from ADP in the presence of a proton gradient across the membrane. The alpha chain is a regulatory subunit. The polypeptide is ATP synthase subunit alpha (Corynebacterium aurimucosum (strain ATCC 700975 / DSM 44827 / CIP 107346 / CN-1) (Corynebacterium nigricans)).